Consider the following 181-residue polypeptide: Acireductone dioxygenase (181 aa).

Fe(2+) is bound by residues histidine 97, histidine 99, glutamate 103, and histidine 141. Positions 97, 99, 103, and 141 each coordinate Ni(2+).

Belongs to the acireductone dioxygenase (ARD) family. As to quaternary structure, monomer. Fe(2+) serves as cofactor. It depends on Ni(2+) as a cofactor.

The enzyme catalyses 1,2-dihydroxy-5-(methylsulfanyl)pent-1-en-3-one + O2 = 3-(methylsulfanyl)propanoate + CO + formate + 2 H(+). It carries out the reaction 1,2-dihydroxy-5-(methylsulfanyl)pent-1-en-3-one + O2 = 4-methylsulfanyl-2-oxobutanoate + formate + 2 H(+). It participates in amino-acid biosynthesis; L-methionine biosynthesis via salvage pathway; L-methionine from S-methyl-5-thio-alpha-D-ribose 1-phosphate: step 5/6. Its function is as follows. Catalyzes 2 different reactions between oxygen and the acireductone 1,2-dihydroxy-3-keto-5-methylthiopentene (DHK-MTPene) depending upon the metal bound in the active site. Fe-containing acireductone dioxygenase (Fe-ARD) produces formate and 2-keto-4-methylthiobutyrate (KMTB), the alpha-ketoacid precursor of methionine in the methionine recycle pathway. Ni-containing acireductone dioxygenase (Ni-ARD) produces methylthiopropionate, carbon monoxide and formate, and does not lie on the methionine recycle pathway. The protein is Acireductone dioxygenase of Pseudomonas fluorescens (strain ATCC BAA-477 / NRRL B-23932 / Pf-5).